The primary structure comprises 260 residues: Carbonic anhydrase 2 (260 aa).

At S2 the chain carries N-acetylserine. S2 carries the phosphoserine modification. One can recognise an Alpha-carbonic anhydrase domain in the interval 3–259 (HHWGYSKSNG…LKNRKIKASF (257 aa)). The segment at 16-39 (WHKEFPIANGDRQSPVDIDTGTAQ) is disordered. H64 serves as the catalytic Proton donor/acceptor. A Phosphoserine modification is found at S87. Zn(2+) is bound by residues H94, H96, and H119. S165 is subject to Phosphoserine. 198–199 (TT) is a substrate binding site. At S232 the chain carries Phosphoserine.

The protein belongs to the alpha-carbonic anhydrase family. In terms of assembly, interacts with SLC4A4 and SLC26A6. Interaction with SLC4A7 regulates SLC4A7 transporter activity. Requires Zn(2+) as cofactor.

It localises to the cytoplasm. The protein localises to the cell membrane. It carries out the reaction hydrogencarbonate + H(+) = CO2 + H2O. It catalyses the reaction urea = cyanamide + H2O. Its activity is regulated as follows. Inhibited by acetazolamide. Functionally, catalyzes the reversible hydration of carbon dioxide. Can also hydrate cyanamide to urea. Involved in the regulation of fluid secretion into the anterior chamber of the eye. Essential for bone resorption and osteoclast differentiation. Contributes to intracellular pH regulation in the duodenal upper villous epithelium during proton-coupled peptide absorption. Stimulates the chloride-bicarbonate exchange activity of SLC26A6. The protein is Carbonic anhydrase 2 (Ca2) of Rattus norvegicus (Rat).